The primary structure comprises 428 residues: Dihydroorotase (428 aa).

Zn(2+) contacts are provided by histidine 59 and histidine 61. Residues 61–63 and asparagine 93 each bind substrate; that span reads HFR. Zn(2+)-binding residues include aspartate 151, histidine 178, and histidine 231. Asparagine 277 provides a ligand contact to substrate. Aspartate 304 lines the Zn(2+) pocket. Aspartate 304 is a catalytic residue. Substrate contacts are provided by residues histidine 308 and 322-323; that span reads FG.

It belongs to the metallo-dependent hydrolases superfamily. DHOase family. Class I DHOase subfamily. Zn(2+) serves as cofactor.

The enzyme catalyses (S)-dihydroorotate + H2O = N-carbamoyl-L-aspartate + H(+). It functions in the pathway pyrimidine metabolism; UMP biosynthesis via de novo pathway; (S)-dihydroorotate from bicarbonate: step 3/3. Its function is as follows. Catalyzes the reversible cyclization of carbamoyl aspartate to dihydroorotate. The chain is Dihydroorotase from Bacillus licheniformis (strain ATCC 14580 / DSM 13 / JCM 2505 / CCUG 7422 / NBRC 12200 / NCIMB 9375 / NCTC 10341 / NRRL NRS-1264 / Gibson 46).